Consider the following 486-residue polypeptide: Intermediate cleaving peptidase 55 (486 aa).

Residues 1 to 19 constitute a mitochondrion transit peptide; sequence MSGYIRTLFIRNRFSNYRL. Positions 317, 328, 407, 434, and 457 each coordinate Mn(2+).

It belongs to the peptidase M24B family. Requires Mn(2+) as cofactor.

It is found in the mitochondrion inner membrane. It carries out the reaction The enzyme cleaves the 36-Pro-Pro-37 bond of cysteine desulfurase (EC 2.8.1.7) removing three amino acid residues (Tyr-Ser-Pro) from the N-terminus after cleavage by mitochondrial processing peptidase.. Functionally, aminopeptidase which cleaves preprotein intermediates that carry destabilizing N-ter amino acid residues after the mitochondrial processing peptidase (MPP) cleavage site and is thus critical for stabilization of the mitochondrial proteome. The chain is Intermediate cleaving peptidase 55 (icp55) from Schizosaccharomyces pombe (strain 972 / ATCC 24843) (Fission yeast).